The primary structure comprises 176 residues: Lipoprotein signal peptidase (176 aa).

A run of 4 helical transmembrane segments spans residues 11–31 (AFVA…LDQL), 38–58 (ATMQ…VLVF), 76–96 (WFFT…MHQH), and 101–121 (LLPA…VDRL). Active-site residues include Asp-128 and Asp-146. A helical transmembrane segment spans residues 139-159 (WPAFNLADSAITLGVGLMLWA).

It belongs to the peptidase A8 family.

The protein resides in the cell inner membrane. The enzyme catalyses Release of signal peptides from bacterial membrane prolipoproteins. Hydrolyzes -Xaa-Yaa-Zaa-|-(S,diacylglyceryl)Cys-, in which Xaa is hydrophobic (preferably Leu), and Yaa (Ala or Ser) and Zaa (Gly or Ala) have small, neutral side chains.. Its pathway is protein modification; lipoprotein biosynthesis (signal peptide cleavage). This protein specifically catalyzes the removal of signal peptides from prolipoproteins. In Azoarcus sp. (strain BH72), this protein is Lipoprotein signal peptidase.